Reading from the N-terminus, the 60-residue chain is Large ribosomal subunit protein uL30 (60 aa).

This sequence belongs to the universal ribosomal protein uL30 family. In terms of assembly, part of the 50S ribosomal subunit.

This chain is Large ribosomal subunit protein uL30, found in Carboxydothermus hydrogenoformans (strain ATCC BAA-161 / DSM 6008 / Z-2901).